Consider the following 444-residue polypeptide: Zinc finger CCCH domain-containing protein 63 (444 aa).

3 C3H1-type zinc fingers span residues 56 to 84, 101 to 129, and 147 to 175; these read RIGE…HPAD, RIGQ…HPRE, and RPNE…HPQP. Residues 251–276 form a disordered region; it reads GSSSSDDQQRTAGGAQYYTGSRHSET. 2 C3H1-type zinc fingers span residues 309 to 337 and 355 to 383; these read RPDQ…HPKE and RPGE…HPMG. A disordered region spans residues 405–444; it reads PVPAHSEVSPDNVSGRSRRITHSDSQQIPSGERGTEREAS.

The polypeptide is Zinc finger CCCH domain-containing protein 63 (Oryza sativa subsp. japonica (Rice)).